A 1054-amino-acid polypeptide reads, in one-letter code: Proteoglycan 4 (1054 aa).

An N-terminal signal peptide occupies residues M1 to S24. SMB domains are found at residues D26 to S69 and P66 to H108. 14 disulfides stabilise this stretch: C30–C34, C30–C46, C34–C64, C44–C46, C44–C57, C50–C56, C57–C64, C70–C74, C70–C86, C74–C104, C84–C86, C84–C97, C90–C96, and C97–C104. A glycan (N-linked (GlcNAc...) asparagine) is linked at N109. A compositionally biased stretch (low complexity) spans S110 to S125. Residues S110–F764 form a disordered region. A glycan (O-linked (GalNAc...) serine) is linked at S135. Residues Q162 to I175 show a composition bias toward low complexity. Over residues E188–K200 the composition is skewed to basic and acidic residues. Residues T229–T238 show a composition bias toward pro residues. O-linked (GalNAc...) threonine glycosylation is found at T237 and T250. Over residues T286–A295 the composition is skewed to low complexity. O-linked (GalNAc...) threonine glycosylation is present at T301. O-linked (GalNAc...) serine glycosylation occurs at S302. Residues S302–E318 are compositionally biased toward basic and acidic residues. An O-linked (GalNAc...) threonine glycan is attached at T306. An O-linked (GalNAc...) serine glycan is attached at S313. The stretch at V317 to P324 is one 1; approximate repeat. Positions V317–T618 are 37 X 8 AA repeats of K-X-P-X-P-T-T-X. Positions P319 to A328 are enriched in polar residues. One copy of the 2; approximate repeat lies at K325 to T332. O-linked (GalNAc...) serine glycosylation occurs at S327. The span at P329 to T339 shows a compositional bias: low complexity. Residues T330, T338, T354, T362, T369, T377, T378, T385, T386, T393, and T394 are each glycosylated (O-linked (GalNAc...) threonine). Residues K333–K340 form a 3; approximate repeat. A 4; approximate repeat occupies Q349 to A356. Residues K357–K364 form repeat 5. Positions K364 to E399 are enriched in basic and acidic residues. The stretch at K365–R371 is one 6; approximate repeat. 5 tandem repeats follow at residues K372–P379, K380–P387, K388–P395, K396–P403, and K404–K411. Residues P400 to P426 are compositionally biased toward pro residues. The stretch at K412–P418 is one 12; approximate repeat. Residues T416, T417, T424, T432, T433, T440, T441, and T448 are each glycosylated (O-linked (GalNAc...) threonine). Tandem repeats lie at residues K419–P426, K427–T434, and K435–T442. Residues K427–E550 show a composition bias toward basic and acidic residues. The 16; approximate repeat unit spans residues K443–R450. 21 repeat units span residues K451–P458, K459–P466, K467–L474, K475–P482, K483–P490, K491–P498, K499–P506, K507–P514, K515–P522, K523–P530, K531–P538, K539–P546, K547–P554, K555–P562, K563–P570, K571–P578, K579–R586, K587–P594, K595–P602, K603–P610, and K611–T618. O-linked (GalNAc...) threonine glycans are attached at residues T472, T480, T481, T488, T489, T496, T497, T504, T505, T512, T520, T521, T528, and T529. The segment covering P551–P562 has biased composition (pro residues). O-linked (GalNAc...) threonine glycans are attached at residues T553, T560, T561, T568, T569, T576, and T577. The span at K563–E614 shows a compositional bias: basic and acidic residues. O-linked (GalNAc...) threonine glycans are attached at residues T592, T600, and T601. Positions P615 to T624 are enriched in low complexity. O-linked (GalNAc...) threonine glycans are attached at residues T622, T624, T628, T629, and T692. Residues K672–K699 are compositionally biased toward basic residues. Residues T700–P712 are compositionally biased toward low complexity. The segment covering E713–P735 has biased composition (polar residues). C795 and C1053 are oxidised to a cystine. 2 Hemopexin repeats span residues G797–I840 and P841–L888. The N-linked (GlcNAc...) asparagine glycan is linked to N808. The O-linked (GalNAc...) threonine glycan is linked to T810. An N-linked (GlcNAc...) asparagine glycan is attached at N938.

Homodimer; disulfide-linked. Post-translationally, N-glycosylated. O-glycosylated; contains glycosaminoglycan chondroitin sulfate and keratan sulfate. O-glycosylated with sialylated oligosaccharides which are predominantly represented by the monosialylated core type I structure, NeuNAcalpha2-3Galbeta1-3GalNAc, with smaller amounts of disialylated O-glycans. In terms of processing, the disulfide bond between Cys-795 and Cys-1053 is essential for protein cleavage. Post-translationally, proteolytically cleaved by cathepsin CTSG. Highly expressed in cartilage, bone and liver and weakly expressed in heart, brain and muscle. Expressed in the surface chondrocytes and in synovial intimal cells. Isoform B is expressed in bone, small intestine, muscle, testis, heart, liver and lung. Isoform C and isoform D are widely expressed.

Its subcellular location is the secreted. Functionally, plays a role in boundary lubrication within articulating joints. Prevents protein deposition onto cartilage from synovial fluid by controlling adhesion-dependent synovial growth and inhibiting the adhesion of synovial cells to the cartilage surface. The chain is Proteoglycan 4 (Prg4) from Mus musculus (Mouse).